A 120-amino-acid chain; its full sequence is U13-lycotoxin-Ls1e (120 aa).

The signal sequence occupies residues 1–16; sequence MKILFVLISILYAVYC. The propeptide occupies 17–54; it reads FSSEEDVDSAYLANELEPVEDINSEQYAALEPKEEQER. 4 disulfides stabilise this stretch: Cys56-Cys70, Cys63-Cys76, Cys69-Cys87, and Cys78-Cys85. One can recognise an Agouti domain in the interval 56 to 95; it reads CAGMGRDCKDDCDCCLNIATCNCWFGRYFCSCTFGDYQTC.

The protein belongs to the neurotoxin 05 (agouti) family. In terms of processing, contains 6 disulfide bonds. Expressed by the venom gland.

The protein resides in the secreted. The sequence is that of U13-lycotoxin-Ls1e from Lycosa singoriensis (Wolf spider).